The sequence spans 376 residues: Succinate--CoA ligase [ADP-forming] subunit beta (376 aa).

The 226-residue stretch at 9–234 (KAIAKKYGIP…ERELSELEKE (226 aa)) folds into the ATP-grasp domain. ATP contacts are provided by residues K45, 52-54 (GRG), E91, E94, and E99. Residues N191 and D204 each contribute to the Mg(2+) site. Residues N254 and 311-313 (GIT) contribute to the substrate site.

The protein belongs to the succinate/malate CoA ligase beta subunit family. In terms of assembly, heterotetramer of two alpha and two beta subunits. The cofactor is Mg(2+).

It carries out the reaction succinate + ATP + CoA = succinyl-CoA + ADP + phosphate. The enzyme catalyses GTP + succinate + CoA = succinyl-CoA + GDP + phosphate. It functions in the pathway carbohydrate metabolism; tricarboxylic acid cycle; succinate from succinyl-CoA (ligase route): step 1/1. In terms of biological role, succinyl-CoA synthetase functions in the citric acid cycle (TCA), coupling the hydrolysis of succinyl-CoA to the synthesis of either ATP or GTP and thus represents the only step of substrate-level phosphorylation in the TCA. The beta subunit provides nucleotide specificity of the enzyme and binds the substrate succinate, while the binding sites for coenzyme A and phosphate are found in the alpha subunit. This chain is Succinate--CoA ligase [ADP-forming] subunit beta, found in Ignicoccus hospitalis (strain KIN4/I / DSM 18386 / JCM 14125).